The chain runs to 139 residues: Small ribosomal subunit protein bS6 (139 aa).

The segment covering 95 to 121 (AVTEQSEMLKAEESRNERRERRERPND) has biased composition (basic and acidic residues). A disordered region spans residues 95 to 139 (AVTEQSEMLKAEESRNERRERRERPNDNAEGADGDDNSDSDNADE). Acidic residues predominate over residues 124 to 139 (EGADGDDNSDSDNADE).

Belongs to the bacterial ribosomal protein bS6 family.

In terms of biological role, binds together with bS18 to 16S ribosomal RNA. The sequence is that of Small ribosomal subunit protein bS6 from Pseudomonas aeruginosa (strain LESB58).